A 66-amino-acid chain; its full sequence is Large ribosomal subunit protein bL33c (66 aa).

It belongs to the bacterial ribosomal protein bL33 family.

The protein resides in the plastid. The protein localises to the chloroplast. This Liriodendron tulipifera (Tuliptree) protein is Large ribosomal subunit protein bL33c.